Here is a 334-residue protein sequence, read N- to C-terminus: Ornithine carbamoyltransferase subunit I (334 aa).

Residues 56-59 (STRT), Gln83, Arg107, and 134-137 (HPTQ) contribute to the carbamoyl phosphate site. L-ornithine is bound by residues Asn168, Asp232, and 236-237 (SM). Cys274 is a binding site for Zn(2+). Carbamoyl phosphate-binding positions include 274-275 (CL) and Arg320.

Belongs to the aspartate/ornithine carbamoyltransferase superfamily. OTCase family. As to quaternary structure, in E.coli strain K12, trimer of identical or non-identical chains are composed of ArgI (I) and/or ArgF (F). The trimer has the following composition: FFI, FFF, FII, III. E.coli strains B and W, which are known to contain only ArgI, produce only a trimer of identical chains (III).

It localises to the cytoplasm. The enzyme catalyses carbamoyl phosphate + L-ornithine = L-citrulline + phosphate + H(+). It participates in amino-acid biosynthesis; L-arginine biosynthesis; L-arginine from L-ornithine and carbamoyl phosphate: step 1/3. With respect to regulation, reversely inhibited by N-(N-Sulfodiaminophosphinyl)-L-ornithine. Zinc is an allosteric regulator of the substrate-bound enzyme and a competitive inhibitor of the free enzyme. Reversibly catalyzes the transfer of the carbamoyl group from carbamoyl phosphate (CP) to the N(epsilon) atom of ornithine (ORN) to produce L-citrulline, which is a substrate for argininosuccinate synthetase, the enzyme involved in the final step in arginine biosynthesis. The polypeptide is Ornithine carbamoyltransferase subunit I (Escherichia coli (strain K12)).